Reading from the N-terminus, the 219-residue chain is Orotate phosphoribosyltransferase (219 aa).

5-phospho-alpha-D-ribose 1-diphosphate is bound at residue Lys-26. 34–35 (FF) is a binding site for orotate. 5-phospho-alpha-D-ribose 1-diphosphate-binding positions include 72–73 (YK), Arg-98, Lys-99, Lys-102, His-104, and 124–132 (DDVITAGTA). Orotate-binding residues include Thr-128 and Arg-156.

Belongs to the purine/pyrimidine phosphoribosyltransferase family. PyrE subfamily. Homodimer. Requires Mg(2+) as cofactor.

It catalyses the reaction orotidine 5'-phosphate + diphosphate = orotate + 5-phospho-alpha-D-ribose 1-diphosphate. It functions in the pathway pyrimidine metabolism; UMP biosynthesis via de novo pathway; UMP from orotate: step 1/2. In terms of biological role, catalyzes the transfer of a ribosyl phosphate group from 5-phosphoribose 1-diphosphate to orotate, leading to the formation of orotidine monophosphate (OMP). This is Orotate phosphoribosyltransferase from Xanthomonas campestris pv. campestris (strain 8004).